Reading from the N-terminus, the 451-residue chain is PTS system galactitol-specific EIIC component (451 aa).

Residues 6–435 (MRYILDLGPT…IYLTGIFMTW (430 aa)) form the PTS EIIC type-2 domain. The next 10 helical transmembrane spans lie at 9–29 (ILDL…SKIL), 41–61 (LHIG…LDSI), 92–112 (ASQI…AMLL), 138–158 (LATG…AFVY), 218–238 (FGPF…IGIL), 305–325 (AVVS…VCVP), 329–349 (VLPF…VAVH), 357–377 (LISG…TIGL), 392–412 (GMVA…IQVF), and 415–435 (QNIP…FMTW).

As to quaternary structure, forms a complex with one each of subunit of GatA, GatB and 2 subunits of GatC.

Its subcellular location is the cell inner membrane. Its function is as follows. The phosphoenolpyruvate-dependent sugar phosphotransferase system (PTS), a major carbohydrate active transport system, catalyzes the phosphorylation of incoming sugar substrates concomitant with their translocation across the cell membrane. The enzyme II complex composed of GatA, GatB and GatC is involved in galactitol transport. In Escherichia coli O157:H7, this protein is PTS system galactitol-specific EIIC component (gatC).